Consider the following 122-residue polypeptide: SIVELGKMIIQETGKSPFPSYTSYGCFCGGGERGPPLDATDRCCLAHSCCYDTLPDCSPKTDRYKYKRENGEIICENSTSCKKRICECDKAMAVCLRKNLNTYNKKYTYYPNFWCKGDIEKC.

7 disulfides stabilise this stretch: Cys-26–Cys-115, Cys-28–Cys-44, Cys-43–Cys-95, Cys-49–Cys-122, Cys-50–Cys-88, Cys-57–Cys-81, and Cys-75–Cys-86. The interval 105–117 (KKYTYYPNFWCKG) is important for membrane-damaging activities in eukaryotes and bacteria; heparin-binding.

It belongs to the phospholipase A2 family. Group II subfamily. S49 sub-subfamily. In terms of assembly, monomer. As to expression, expressed by the venom gland.

The protein resides in the secreted. In terms of biological role, snake venom phospholipase A2 homolog that lacks enzymatic activity. Shows high myotoxin activities and displays edema-inducing activities. Has cytotoxic activities against HUVEC cells (LC(50)=12.2 uL) and human lung adenocarcinoma A549 cells (LC(50)=8.5 uL). This is Phospholipase A2 homolog ECS_00014 from Echis carinatus sochureki (Saw-scaled viper).